We begin with the raw amino-acid sequence, 161 residues long: uncharacterized protein (161 aa).

An RING-type zinc finger spans residues 72–134 (CAICLDNLQN…EAQQTCPTCR (63 aa)). The interval 140–161 (DKEVEEEERQRNLEELHDSMYG) is disordered.

This is an uncharacterized protein from Caenorhabditis elegans.